The following is a 138-amino-acid chain: Glutaredoxin-like protein C5orf63 (138 aa).

C41 and C44 are oxidised to a cystine. The segment covering 55–64 has biased composition (basic and acidic residues); the sequence is ENRQPYKDQK. The tract at residues 55 to 88 is disordered; sequence ENRQPYKDQKLPGTRRRRSPSSPSHPHMASQSGK.

The protein belongs to the glutaredoxin family. YDR286C subfamily.

This Homo sapiens (Human) protein is Glutaredoxin-like protein C5orf63 (C5orf63).